Here is a 165-residue protein sequence, read N- to C-terminus: Probable DNA polymerase III subunit chi (165 aa).

Belongs to the DNA polymerase III chi/HolC chain family. In terms of assembly, DNA polymerase III contains a core (composed of alpha, epsilon and theta chains) that associates with a tau subunit. This core dimerizes to form the POLIII' complex. PolIII' associates with the gamma complex (composed of gamma, delta, delta', psi and chi chains) and with the beta chain to form the complete DNA polymerase III complex. Interacts directly with the psi subunit (holD). The only subunit of the DNA polymerase III holoenzyme known to interact with single-stranded DNA binding protein (SSB).

It carries out the reaction DNA(n) + a 2'-deoxyribonucleoside 5'-triphosphate = DNA(n+1) + diphosphate. Part of the beta sliding clamp loading complex, which hydrolyzes ATP to load the beta clamp onto primed DNA to form the DNA replication pre-initiation complex. DNA polymerase III is a complex, multichain enzyme responsible for most of the replicative synthesis in bacteria. This DNA polymerase also exhibits 3' to 5' exonuclease activity. The protein is Probable DNA polymerase III subunit chi of Rickettsia prowazekii (strain Madrid E).